We begin with the raw amino-acid sequence, 477 residues long: ATP synthase subunit beta (477 aa).

Position 148 to 155 (148 to 155 (GGAGVGKT)) interacts with ATP.

The protein belongs to the ATPase alpha/beta chains family. In terms of assembly, F-type ATPases have 2 components, CF(1) - the catalytic core - and CF(0) - the membrane proton channel. CF(1) has five subunits: alpha(3), beta(3), gamma(1), delta(1), epsilon(1). CF(0) has three main subunits: a(1), b(2) and c(9-12). The alpha and beta chains form an alternating ring which encloses part of the gamma chain. CF(1) is attached to CF(0) by a central stalk formed by the gamma and epsilon chains, while a peripheral stalk is formed by the delta and b chains.

The protein localises to the cell inner membrane. It carries out the reaction ATP + H2O + 4 H(+)(in) = ADP + phosphate + 5 H(+)(out). In terms of biological role, produces ATP from ADP in the presence of a proton gradient across the membrane. The catalytic sites are hosted primarily by the beta subunits. The polypeptide is ATP synthase subunit beta (Psychrobacter cryohalolentis (strain ATCC BAA-1226 / DSM 17306 / VKM B-2378 / K5)).